The following is a 428-amino-acid chain: Phosphomethylpyrimidine synthase (428 aa).

Residues Asn66, Met95, Tyr124, His163, 185–187, 226–229, and Glu265 contribute to the substrate site; these read SRG and DGLR. Zn(2+) is bound at residue His269. Tyr292 serves as a coordination point for substrate. His333 lines the Zn(2+) pocket. Residues Cys407, Cys410, and Cys414 each contribute to the [4Fe-4S] cluster site.

It belongs to the ThiC family. [4Fe-4S] cluster serves as cofactor.

It carries out the reaction 5-amino-1-(5-phospho-beta-D-ribosyl)imidazole + S-adenosyl-L-methionine = 4-amino-2-methyl-5-(phosphooxymethyl)pyrimidine + CO + 5'-deoxyadenosine + formate + L-methionine + 3 H(+). Its pathway is cofactor biosynthesis; thiamine diphosphate biosynthesis. In terms of biological role, catalyzes the synthesis of the hydroxymethylpyrimidine phosphate (HMP-P) moiety of thiamine from aminoimidazole ribotide (AIR) in a radical S-adenosyl-L-methionine (SAM)-dependent reaction. The chain is Phosphomethylpyrimidine synthase from Thermococcus kodakarensis (strain ATCC BAA-918 / JCM 12380 / KOD1) (Pyrococcus kodakaraensis (strain KOD1)).